Here is a 244-residue protein sequence, read N- to C-terminus: tRNA pseudouridine synthase A (244 aa).

Asp-52 serves as the catalytic Nucleophile. Tyr-110 contacts substrate.

This sequence belongs to the tRNA pseudouridine synthase TruA family. Homodimer.

It carries out the reaction uridine(38/39/40) in tRNA = pseudouridine(38/39/40) in tRNA. Formation of pseudouridine at positions 38, 39 and 40 in the anticodon stem and loop of transfer RNAs. This chain is tRNA pseudouridine synthase A, found in Caldicellulosiruptor saccharolyticus (strain ATCC 43494 / DSM 8903 / Tp8T 6331).